A 269-amino-acid chain; its full sequence is Magnetosome protein MamX (269 aa).

Residues 1–10 (MNTKAVAHPD) are Cytoplasmic-facing. Residues 11-31 (IAVWIMALGIAFSMALVLTAL) form a helical membrane-spanning segment. Residues 32-269 (FNANPWEDHT…NVGGVDAEER (238 aa)) are Lumenal-facing. The MCR (magnetochrome) 1 signature appears at 48–71 (IVAGMAAPHRDGREKMVCSSCHIV). Heme is bound by residues Cys-65, Cys-68, His-69, Cys-104, Cys-107, and His-108. The MCR 2 motif lies at 87–110 (IVEGTPAPHVDGREKMACASCHTI).

This sequence belongs to the magnetosome MamX family. In terms of assembly, probably interacts with FtsZ-like and MamY proteins. Heme is required as a cofactor.

The protein localises to the magnetosome membrane. Functionally, required for correct biomineralization of the magnetosome, maybe via redox control. May function with MamY, MamZ amd Mms6 in biomineralization. The sequence is that of Magnetosome protein MamX from Magnetospirillum gryphiswaldense (strain DSM 6361 / JCM 21280 / NBRC 15271 / MSR-1).